The chain runs to 137 residues: ATP synthase epsilon chain (137 aa).

This sequence belongs to the ATPase epsilon chain family. F-type ATPases have 2 components, CF(1) - the catalytic core - and CF(0) - the membrane proton channel. CF(1) has five subunits: alpha(3), beta(3), gamma(1), delta(1), epsilon(1). CF(0) has three main subunits: a, b and c.

It is found in the cellular thylakoid membrane. In terms of biological role, produces ATP from ADP in the presence of a proton gradient across the membrane. This is ATP synthase epsilon chain from Synechococcus sp. (strain JA-2-3B'a(2-13)) (Cyanobacteria bacterium Yellowstone B-Prime).